The sequence spans 158 residues: NADH-quinone oxidoreductase subunit B (158 aa).

The [4Fe-4S] cluster site is built by cysteine 37, cysteine 38, cysteine 102, and cysteine 132.

It belongs to the complex I 20 kDa subunit family. In terms of assembly, NDH-1 is composed of 14 different subunits. Subunits NuoB, C, D, E, F, and G constitute the peripheral sector of the complex. Requires [4Fe-4S] cluster as cofactor.

It localises to the cell inner membrane. The enzyme catalyses a quinone + NADH + 5 H(+)(in) = a quinol + NAD(+) + 4 H(+)(out). Functionally, NDH-1 shuttles electrons from NADH, via FMN and iron-sulfur (Fe-S) centers, to quinones in the respiratory chain. Couples the redox reaction to proton translocation (for every two electrons transferred, four hydrogen ions are translocated across the cytoplasmic membrane), and thus conserves the redox energy in a proton gradient. The polypeptide is NADH-quinone oxidoreductase subunit B (Dechloromonas aromatica (strain RCB)).